The sequence spans 718 residues: Ribosomal RNA large subunit methyltransferase K/L (718 aa).

The region spanning 43 to 154 (TQYRILLWSR…QDELVVSLDL (112 aa)) is the THUMP domain.

This sequence belongs to the methyltransferase superfamily. RlmKL family.

The protein resides in the cytoplasm. The catalysed reaction is guanosine(2445) in 23S rRNA + S-adenosyl-L-methionine = N(2)-methylguanosine(2445) in 23S rRNA + S-adenosyl-L-homocysteine + H(+). The enzyme catalyses guanosine(2069) in 23S rRNA + S-adenosyl-L-methionine = N(2)-methylguanosine(2069) in 23S rRNA + S-adenosyl-L-homocysteine + H(+). Specifically methylates the guanine in position 2445 (m2G2445) and the guanine in position 2069 (m7G2069) of 23S rRNA. The chain is Ribosomal RNA large subunit methyltransferase K/L from Histophilus somni (strain 2336) (Haemophilus somnus).